Consider the following 339-residue polypeptide: RNA 3'-terminal phosphate cyclase (339 aa).

Residues Asp-109 and 286–290 contribute to the ATP site; that span reads HLADQ. The active-site Tele-AMP-histidine intermediate is His-310.

It belongs to the RNA 3'-terminal cyclase family. Type 1 subfamily.

Its subcellular location is the cytoplasm. The catalysed reaction is a 3'-end 3'-phospho-ribonucleotide-RNA + ATP = a 3'-end 2',3'-cyclophospho-ribonucleotide-RNA + AMP + diphosphate. Its function is as follows. Catalyzes the conversion of 3'-phosphate to a 2',3'-cyclic phosphodiester at the end of RNA. The mechanism of action of the enzyme occurs in 3 steps: (A) adenylation of the enzyme by ATP; (B) transfer of adenylate to an RNA-N3'P to produce RNA-N3'PP5'A; (C) and attack of the adjacent 2'-hydroxyl on the 3'-phosphorus in the diester linkage to produce the cyclic end product. The biological role of this enzyme is unknown but it is likely to function in some aspects of cellular RNA processing. In Halobacterium salinarum (strain ATCC 29341 / DSM 671 / R1), this protein is RNA 3'-terminal phosphate cyclase.